Here is a 497-residue protein sequence, read N- to C-terminus: Glycerol kinase (497 aa).

Thr-11 lines the ADP pocket. Positions 11, 12, and 13 each coordinate ATP. Thr-11 is a sn-glycerol 3-phosphate binding site. Arg-15 is a binding site for ADP. Residues Arg-81, Glu-82, Tyr-133, and Asp-242 each coordinate sn-glycerol 3-phosphate. Positions 81, 82, 133, 242, and 243 each coordinate glycerol. Residues Thr-264 and Gly-307 each coordinate ADP. Residues Thr-264, Gly-307, Gln-311, and Gly-412 each coordinate ATP. Residues Gly-412 and Asn-416 each coordinate ADP.

It belongs to the FGGY kinase family.

It catalyses the reaction glycerol + ATP = sn-glycerol 3-phosphate + ADP + H(+). The protein operates within polyol metabolism; glycerol degradation via glycerol kinase pathway; sn-glycerol 3-phosphate from glycerol: step 1/1. Inhibited by fructose 1,6-bisphosphate (FBP). Key enzyme in the regulation of glycerol uptake and metabolism. Catalyzes the phosphorylation of glycerol to yield sn-glycerol 3-phosphate. This is Glycerol kinase from Polaromonas naphthalenivorans (strain CJ2).